We begin with the raw amino-acid sequence, 217 residues long: Probable GTP-binding protein EngB (217 aa).

Residues 29 to 213 (GPLEVAFAGR…RQAIGETVGV (185 aa)) form the EngB-type G domain. GTP contacts are provided by residues 37–44 (GRSNVGKS), 64–68 (GRTQE), 91–94 (DMPG), 158–161 (TKTD), and 192–194 (TSS). Residues serine 44 and threonine 66 each coordinate Mg(2+).

The protein belongs to the TRAFAC class TrmE-Era-EngA-EngB-Septin-like GTPase superfamily. EngB GTPase family. Mg(2+) is required as a cofactor.

Its function is as follows. Necessary for normal cell division and for the maintenance of normal septation. The protein is Probable GTP-binding protein EngB of Rhizobium leguminosarum bv. trifolii (strain WSM2304).